Consider the following 425-residue polypeptide: Tol-Pal system protein TolB (425 aa).

Residues 1-25 (MTRKHILSFALMTALGMTVTSTAFA) form the signal peptide.

The protein belongs to the TolB family. The Tol-Pal system is composed of five core proteins: the inner membrane proteins TolA, TolQ and TolR, the periplasmic protein TolB and the outer membrane protein Pal. They form a network linking the inner and outer membranes and the peptidoglycan layer.

It localises to the periplasm. Its function is as follows. Part of the Tol-Pal system, which plays a role in outer membrane invagination during cell division and is important for maintaining outer membrane integrity. This Acinetobacter baylyi (strain ATCC 33305 / BD413 / ADP1) protein is Tol-Pal system protein TolB.